The sequence spans 130 residues: S-adenosylmethionine decarboxylase proenzyme (130 aa).

Serine 63 functions as the Schiff-base intermediate with substrate; via pyruvic acid in the catalytic mechanism. Pyruvic acid (Ser); by autocatalysis is present on serine 63. Histidine 68 (proton acceptor; for processing activity) is an active-site residue. Cysteine 83 serves as the catalytic Proton donor; for catalytic activity.

This sequence belongs to the prokaryotic AdoMetDC family. Type 1 subfamily. Heterotetramer of two alpha and two beta chains arranged as a dimer of alpha/beta heterodimers. The cofactor is pyruvate. In terms of processing, is synthesized initially as an inactive proenzyme. Formation of the active enzyme involves a self-maturation process in which the active site pyruvoyl group is generated from an internal serine residue via an autocatalytic post-translational modification. Two non-identical subunits are generated from the proenzyme in this reaction, and the pyruvate is formed at the N-terminus of the alpha chain, which is derived from the carboxyl end of the proenzyme. The post-translation cleavage follows an unusual pathway, termed non-hydrolytic serinolysis, in which the side chain hydroxyl group of the serine supplies its oxygen atom to form the C-terminus of the beta chain, while the remainder of the serine residue undergoes an oxidative deamination to produce ammonia and the pyruvoyl group blocking the N-terminus of the alpha chain.

It catalyses the reaction S-adenosyl-L-methionine + H(+) = S-adenosyl 3-(methylsulfanyl)propylamine + CO2. The protein operates within amine and polyamine biosynthesis; S-adenosylmethioninamine biosynthesis; S-adenosylmethioninamine from S-adenosyl-L-methionine: step 1/1. Its function is as follows. Catalyzes the decarboxylation of S-adenosylmethionine to S-adenosylmethioninamine (dcAdoMet), the propylamine donor required for the synthesis of the polyamines spermine and spermidine from the diamine putrescine. This is S-adenosylmethionine decarboxylase proenzyme (speH) from Thermotoga maritima (strain ATCC 43589 / DSM 3109 / JCM 10099 / NBRC 100826 / MSB8).